The chain runs to 140 residues: Large ribosomal subunit protein uL16 (140 aa).

Belongs to the universal ribosomal protein uL16 family. Part of the 50S ribosomal subunit.

Functionally, binds 23S rRNA and is also seen to make contacts with the A and possibly P site tRNAs. In Syntrophus aciditrophicus (strain SB), this protein is Large ribosomal subunit protein uL16.